The primary structure comprises 61 residues: Metallothionein-1 (61 aa).

At Met1 the chain carries N-acetylmethionine. The interval 1 to 29 is beta; that stretch reads MDPNCSCPTGGSCTCAGSCKCKACRCPSC. A divalent metal cation is bound by residues Cys5, Cys7, Cys13, Cys15, Cys19, Cys21, Cys24, Cys26, Cys29, Cys33, Cys34, Cys36, Cys37, Cys41, Cys44, Cys48, Cys50, Cys57, Cys59, and Cys60. Positions 30-61 are alpha; sequence KKSCCSCCPVGCAKCAQGCVCKGASDKCSCCA.

This sequence belongs to the metallothionein superfamily. Type 1 family. Monomer.

Its function is as follows. Metallothioneins have a high content of cysteine residues that bind various heavy metals; these proteins are transcriptionally regulated by both heavy metals and glucocorticoids. The sequence is that of Metallothionein-1 (MT1) from Bos taurus (Bovine).